Here is a 166-residue protein sequence, read N- to C-terminus: Large ribosomal subunit protein uL10 (166 aa).

Belongs to the universal ribosomal protein uL10 family. Part of the ribosomal stalk of the 50S ribosomal subunit. The N-terminus interacts with L11 and the large rRNA to form the base of the stalk. The C-terminus forms an elongated spine to which L12 dimers bind in a sequential fashion forming a multimeric L10(L12)X complex.

Its function is as follows. Forms part of the ribosomal stalk, playing a central role in the interaction of the ribosome with GTP-bound translation factors. This Ureaplasma urealyticum serovar 10 (strain ATCC 33699 / Western) protein is Large ribosomal subunit protein uL10.